Consider the following 420-residue polypeptide: Glutamyl-tRNA reductase (420 aa).

Substrate-binding positions include 49 to 52 (TCNR), Ser109, 114 to 116 (EPQ), and Gln120. Cys50 (nucleophile) is an active-site residue. Residue 189–194 (GAGETI) participates in NADP(+) binding.

It belongs to the glutamyl-tRNA reductase family. In terms of assembly, homodimer.

The enzyme catalyses (S)-4-amino-5-oxopentanoate + tRNA(Glu) + NADP(+) = L-glutamyl-tRNA(Glu) + NADPH + H(+). It participates in porphyrin-containing compound metabolism; protoporphyrin-IX biosynthesis; 5-aminolevulinate from L-glutamyl-tRNA(Glu): step 1/2. Functionally, catalyzes the NADPH-dependent reduction of glutamyl-tRNA(Glu) to glutamate 1-semialdehyde (GSA). In Yersinia enterocolitica serotype O:8 / biotype 1B (strain NCTC 13174 / 8081), this protein is Glutamyl-tRNA reductase.